Reading from the N-terminus, the 37-residue chain is Large ribosomal subunit protein bL36 (37 aa).

This sequence belongs to the bacterial ribosomal protein bL36 family.

The sequence is that of Large ribosomal subunit protein bL36 from Desulfitobacterium hafniense (strain Y51).